The primary structure comprises 639 residues: uncharacterized protein (639 aa).

The signal sequence occupies residues 1-16; that stretch reads MLTLYLFTATCCFVCA. 2 disordered regions span residues 80–128 and 432–488; these read RRRA…SDKL and QTAT…TSRT. Composition is skewed to polar residues over residues 108 to 122 and 432 to 446; these read TYATTDPTNSPTASP and QTATASAKAHTQQQP. Over residues 465–480 the composition is skewed to basic and acidic residues; sequence HGDEPHSDGELRRESH.

This is an uncharacterized protein from Human cytomegalovirus (strain Merlin) (HHV-5).